A 239-amino-acid polypeptide reads, in one-letter code: 4-hydroxy-tetrahydrodipicolinate reductase (239 aa).

NAD(+) contacts are provided by residues glycine 12–methionine 17, glycine 94–threonine 96, and alanine 118–phenylalanine 121. Histidine 150 functions as the Proton donor/acceptor in the catalytic mechanism. Histidine 151 provides a ligand contact to (S)-2,3,4,5-tetrahydrodipicolinate. The Proton donor role is filled by lysine 154. Residue glycine 160 to threonine 161 participates in (S)-2,3,4,5-tetrahydrodipicolinate binding.

The protein belongs to the DapB family.

The protein resides in the cytoplasm. The catalysed reaction is (S)-2,3,4,5-tetrahydrodipicolinate + NAD(+) + H2O = (2S,4S)-4-hydroxy-2,3,4,5-tetrahydrodipicolinate + NADH + H(+). It carries out the reaction (S)-2,3,4,5-tetrahydrodipicolinate + NADP(+) + H2O = (2S,4S)-4-hydroxy-2,3,4,5-tetrahydrodipicolinate + NADPH + H(+). It functions in the pathway amino-acid biosynthesis; L-lysine biosynthesis via DAP pathway; (S)-tetrahydrodipicolinate from L-aspartate: step 4/4. Functionally, catalyzes the conversion of 4-hydroxy-tetrahydrodipicolinate (HTPA) to tetrahydrodipicolinate. The sequence is that of 4-hydroxy-tetrahydrodipicolinate reductase from Stenotrophomonas maltophilia (strain K279a).